Consider the following 417-residue polypeptide: RH-like protein (417 aa).

The next 11 helical transmembrane spans lie at 12 to 32, 44 to 64, 77 to 97, 125 to 145, 172 to 192, 203 to 223, 238 to 258, 265 to 285, 287 to 307, 331 to 351, and 358 to 378; these read CLPL…FFFT, LVAS…GLGF, VAFN…LDGF, ISMN…MELV, IHVF…KPLP, TSPS…WPTF, VFST…VSSL, INMT…GASC, VIHS…ISFG, TFGL…ALRV, and MIGF…AMSI.

This sequence belongs to the ammonium transporter (TC 2.A.49) family. Rh subfamily.

It localises to the membrane. Its function is as follows. May be part of an oligomeric complex which is likely to have a transport or channel function in the erythrocyte membrane. The sequence is that of RH-like protein from Macaca fascicularis (Crab-eating macaque).